Reading from the N-terminus, the 292-residue chain is Ribosomal protein L11 methyltransferase (292 aa).

Threonine 144, glycine 165, aspartate 187, and asparagine 229 together coordinate S-adenosyl-L-methionine.

Belongs to the methyltransferase superfamily. PrmA family.

The protein localises to the cytoplasm. It carries out the reaction L-lysyl-[protein] + 3 S-adenosyl-L-methionine = N(6),N(6),N(6)-trimethyl-L-lysyl-[protein] + 3 S-adenosyl-L-homocysteine + 3 H(+). In terms of biological role, methylates ribosomal protein L11. The protein is Ribosomal protein L11 methyltransferase of Ectopseudomonas mendocina (strain ymp) (Pseudomonas mendocina).